Reading from the N-terminus, the 435-residue chain is Glutamyl-tRNA reductase (435 aa).

Substrate contacts are provided by residues 49–52 (TCNR), serine 109, 114–116 (ETQ), and glutamine 120. The active-site Nucleophile is the cysteine 50. NADP(+) is bound at residue 189–194 (GAGEMS).

Belongs to the glutamyl-tRNA reductase family. As to quaternary structure, homodimer.

The enzyme catalyses (S)-4-amino-5-oxopentanoate + tRNA(Glu) + NADP(+) = L-glutamyl-tRNA(Glu) + NADPH + H(+). It participates in porphyrin-containing compound metabolism; protoporphyrin-IX biosynthesis; 5-aminolevulinate from L-glutamyl-tRNA(Glu): step 1/2. Catalyzes the NADPH-dependent reduction of glutamyl-tRNA(Glu) to glutamate 1-semialdehyde (GSA). This is Glutamyl-tRNA reductase from Listeria monocytogenes serotype 4a (strain HCC23).